The chain runs to 399 residues: Transcription factor UNE10 (399 aa).

2 disordered regions span residues 119 to 158 (QSKP…GSQR) and 173 to 228 (MGSH…RRDK). Positions 178-201 (NTIDDHDSVCHSRPQMEDEEEKKA) are enriched in basic and acidic residues. Positions 213–262 (RAAAIHNQSERKRRDKINQRMKTLQKLVPNSSKTDKASMLDEVIEYLKQL) constitute a bHLH domain.

Homodimer. Associates to PTAC12/HMR/PAP5 which acts as a transcriptional coactivator. Interacts with the Pfr form of phyB but barely with that of phyA. Binds to COP1. Post-translationally, ubiquitinated and subsequently targeted to protein degradation by COP1 in the dark, but not in far-red light. Mainly expressed in stems, leaves, seedlings, fruits and flowers, and, to a lower extent, in roots.

The protein localises to the nucleus. With respect to regulation, stabilized by phyA but destabilized by phyB. Accumulates in the dark but not in far-red light upon MG132 treatment, a 26S proteasome inhibitor (at protein level). Functionally, transcription factor binding to G-box elements (5'-CACGTG-3') in target genes promoters, particularly in far-red light but barely in the dark. Required during the fertilization of ovules by pollen. Repressor of phytochrome A-mediated far-red light responses including seed germination, suppression of hypocotyl elongation, and randomization of hypocotyl growth orientation. Does not inhibit phyB-induced red light responses. The chain is Transcription factor UNE10 from Arabidopsis thaliana (Mouse-ear cress).